The sequence spans 168 residues: uncharacterized protein (168 aa).

This is an uncharacterized protein from Escherichia coli (strain K12).